A 279-amino-acid polypeptide reads, in one-letter code: Probable flavonol synthase 4 (279 aa).

A disordered region spans residues 1–25 (MEVERDQHKPPLSLQNNKIPSSQNF). The segment covering 13-25 (SLQNNKIPSSQNF) has biased composition (polar residues). Positions 156–256 (GAGYLMKINY…RMSSVVHIKP (101 aa)) constitute a Fe2OG dioxygenase domain. Position 164-166 (164-166 (NYY)) interacts with 2-oxoglutarate. His181, Asp183, and His237 together coordinate Fe cation. 247 to 249 (RMS) contributes to the 2-oxoglutarate binding site.

It belongs to the iron/ascorbate-dependent oxidoreductase family. The cofactor is Fe(2+).

It catalyses the reaction a (2R,3R)-dihydroflavonol + 2-oxoglutarate + O2 = a flavonol + succinate + CO2 + H2O. The protein operates within secondary metabolite biosynthesis; flavonoid biosynthesis. The protein is Probable flavonol synthase 4 (FLS4) of Arabidopsis thaliana (Mouse-ear cress).